The primary structure comprises 144 residues: uncharacterized protein (144 aa).

Positions 50–140 (NQDKAIVVDT…YWKTDNLPLI (91 aa)) constitute a Rhodanese domain.

This is an uncharacterized protein from Buchnera aphidicola subsp. Acyrthosiphon pisum (strain APS) (Acyrthosiphon pisum symbiotic bacterium).